Here is a 126-residue protein sequence, read N- to C-terminus: Large ribosomal subunit protein uL22 (126 aa).

Belongs to the universal ribosomal protein uL22 family. As to quaternary structure, part of the 50S ribosomal subunit.

In terms of biological role, this protein binds specifically to 23S rRNA; its binding is stimulated by other ribosomal proteins, e.g. L4, L17, and L20. It is important during the early stages of 50S assembly. It makes multiple contacts with different domains of the 23S rRNA in the assembled 50S subunit and ribosome. Functionally, the globular domain of the protein is located near the polypeptide exit tunnel on the outside of the subunit, while an extended beta-hairpin is found that lines the wall of the exit tunnel in the center of the 70S ribosome. The sequence is that of Large ribosomal subunit protein uL22 from Bradyrhizobium sp. (strain BTAi1 / ATCC BAA-1182).